Here is a 731-residue protein sequence, read N- to C-terminus: Inclusion body clearance protein IML2 (731 aa).

Residues 1-26 (MFRVFGSFGSKGNQSSGEEQSTKTKQ) are disordered. Residues 10-26 (SKGNQSSGEEQSTKTKQ) show a composition bias toward polar residues. Phosphoserine occurs at positions 265, 268, and 378. T380 is subject to Phosphothreonine. A phosphoserine mark is found at S383 and S392.

This sequence belongs to the IML2 family. As to quaternary structure, interacts with lipid droplet proteins PET10 and PDR16.

It is found in the cytoplasm. The protein resides in the nucleus. Functionally, inclusion body (IB) resident protein that interacts strongly with lipid droplet (LD) proteins. Involved in LD-mediated IB clearing after protein folding stress, probably by enabling access to the IBs of an LD-stored soluble sterol derivative that acts as a chaperone in inclusion clearing. The sequence is that of Inclusion body clearance protein IML2 from Saccharomyces cerevisiae (strain ATCC 204508 / S288c) (Baker's yeast).